Consider the following 625-residue polypeptide: Thrombopoietin receptor (625 aa).

An N-terminal signal peptide occupies residues 1-25 (MPSWALFMVTSCLLLALPNQAQVTS). Topologically, residues 26–482 (QDVFLLALGT…RVSTGSETAW (457 aa)) are extracellular. N117 carries N-linked (GlcNAc...) asparagine glycosylation. Fibronectin type-III domains follow at residues 178 to 270 (NATA…PVTV) and 383 to 479 (PTPS…TGSE). Residues 465 to 469 (WSAWS) carry the WSXWS motif motif. A helical membrane pass occupies residues 483–504 (ITLVTALLLVLSLSALLGLLLL). Over 505–625 (KWQFPAHYRR…YLPLSYWQQP (121 aa)) the chain is Cytoplasmic. Residues 519–527 (LWPSLPDLH) carry the Box 1 motif motif. Residues K544 and K564 each participate in a glycyl lysine isopeptide (Lys-Gly) (interchain with G-Cter in ubiquitin) cross-link. Phosphotyrosine is present on residues Y616 and Y621.

It belongs to the type I cytokine receptor family. Type 1 subfamily. Homodimer. Interacts with ATXN2L. Interacts with JAK2 and TYK2; these interactions increase MPL localization to the cell membrane. Interacts with THPO. Interacts with SHIP/INPP5D. Interacts with kinases BTK and SYK. In terms of processing, ubiquitination at Lys-544 and Lys-564 targets MPL for degradation by both the lysosomal and proteasomal pathways. The E3 ubiquitin-protein ligase CBL significantly contributes to this ubiquitination.

The protein localises to the cell membrane. It localises to the golgi apparatus. It is found in the cell surface. Functionally, receptor for thrombopoietin that regulates hematopoietic stem cell renewal, megakaryocyte differentiation, and platelet formation. Upon activation by THPO, induces rapid tyrosine phosphorylation and activation of JAK2, providing docking sites for many signaling proteins such as STAT5, SHIP/INPP5D, GRB2, SOS1 and PI3K. In turn, These signaling cascades lead to the proliferation, survival, and differentiation of megakaryocytes, ultimately leading to increased platelet production. Acts as an inhibitor of thrombopoietin signaling by promoting protein down-regulation of full-length isoform Mpl-fl. This is Thrombopoietin receptor (Mpl) from Mus musculus (Mouse).